The primary structure comprises 292 residues: Acetylglutamate kinase (292 aa).

Substrate is bound by residues 64–65 (GG), R86, and N190.

Belongs to the acetylglutamate kinase family. ArgB subfamily.

The protein resides in the cytoplasm. It carries out the reaction N-acetyl-L-glutamate + ATP = N-acetyl-L-glutamyl 5-phosphate + ADP. It participates in amino-acid biosynthesis; L-arginine biosynthesis; N(2)-acetyl-L-ornithine from L-glutamate: step 2/4. Its function is as follows. Catalyzes the ATP-dependent phosphorylation of N-acetyl-L-glutamate. This Geobacter metallireducens (strain ATCC 53774 / DSM 7210 / GS-15) protein is Acetylglutamate kinase.